The chain runs to 288 residues: Nucleotide-binding protein AHA_3920 (288 aa).

Residue 8–15 participates in ATP binding; sequence GRSGSGKT. 56 to 59 is a binding site for GTP; that stretch reads DVRN.

This sequence belongs to the RapZ-like family.

Displays ATPase and GTPase activities. This Aeromonas hydrophila subsp. hydrophila (strain ATCC 7966 / DSM 30187 / BCRC 13018 / CCUG 14551 / JCM 1027 / KCTC 2358 / NCIMB 9240 / NCTC 8049) protein is Nucleotide-binding protein AHA_3920.